A 388-amino-acid polypeptide reads, in one-letter code: Succinate--CoA ligase [ADP-forming] subunit beta (388 aa).

The region spanning Lys9–His244 is the ATP-grasp domain. Residues Lys46, Gly53–Gly55, Glu99, Thr102, and Glu107 each bind ATP. Asn199 and Asp213 together coordinate Mg(2+). Substrate-binding positions include Asn264 and Gly321–Val323.

This sequence belongs to the succinate/malate CoA ligase beta subunit family. In terms of assembly, heterotetramer of two alpha and two beta subunits. Requires Mg(2+) as cofactor.

The enzyme catalyses succinate + ATP + CoA = succinyl-CoA + ADP + phosphate. It catalyses the reaction GTP + succinate + CoA = succinyl-CoA + GDP + phosphate. It functions in the pathway carbohydrate metabolism; tricarboxylic acid cycle; succinate from succinyl-CoA (ligase route): step 1/1. Its function is as follows. Succinyl-CoA synthetase functions in the citric acid cycle (TCA), coupling the hydrolysis of succinyl-CoA to the synthesis of either ATP or GTP and thus represents the only step of substrate-level phosphorylation in the TCA. The beta subunit provides nucleotide specificity of the enzyme and binds the substrate succinate, while the binding sites for coenzyme A and phosphate are found in the alpha subunit. This Pseudomonas syringae pv. syringae (strain B728a) protein is Succinate--CoA ligase [ADP-forming] subunit beta.